The primary structure comprises 359 residues: Probable NAD(P)H nitroreductase PigM (359 aa).

It belongs to the nitroreductase family. FMN serves as cofactor.

Its pathway is antibiotic biosynthesis; prodigiosin biosynthesis. Its function is as follows. Involved in the biosynthesis of 4-methoxy-2,2'-bipyrrole-5-carbaldehyde (MBC), one of the terminal products involved in the biosynthesis of the red antibiotic prodigiosin (Pig). Catalyzes the oxidation of the hydroxy group of 4-hydroxy-2,2'-bipyrrole-5-methanol (HBM) to yield 4-methoxy-2,2'-bipyrrole-5-carbaldehyde (MBC). This is Probable NAD(P)H nitroreductase PigM from Serratia sp. (strain ATCC 39006) (Prodigiosinella confusarubida).